We begin with the raw amino-acid sequence, 266 residues long: Dihydropteroate synthase (266 aa).

The 249-residue stretch at 12–260 (AAIMGILNVT…DVKANQDIVA (249 aa)) folds into the Pterin-binding domain. Mg(2+) is bound at residue Asn19. (7,8-dihydropterin-6-yl)methyl diphosphate is bound by residues Thr59, Asp93, Asn112, Asp176, Lys212, and 248 to 250 (RVH).

Belongs to the DHPS family. As to quaternary structure, homodimer or homotrimer. Mg(2+) serves as cofactor.

The catalysed reaction is (7,8-dihydropterin-6-yl)methyl diphosphate + 4-aminobenzoate = 7,8-dihydropteroate + diphosphate. The protein operates within cofactor biosynthesis; tetrahydrofolate biosynthesis; 7,8-dihydrofolate from 2-amino-4-hydroxy-6-hydroxymethyl-7,8-dihydropteridine diphosphate and 4-aminobenzoate: step 1/2. Functionally, catalyzes the condensation of para-aminobenzoate (pABA) with 6-hydroxymethyl-7,8-dihydropterin diphosphate (DHPt-PP) to form 7,8-dihydropteroate (H2Pte), the immediate precursor of folate derivatives. The chain is Dihydropteroate synthase (folP) from Streptococcus pyogenes serotype M6 (strain ATCC BAA-946 / MGAS10394).